The sequence spans 292 residues: Shikimate dehydrogenase (NADP(+)) (292 aa).

Residues 25–27 (SKS) and Thr72 contribute to the shikimate site. Lys76 functions as the Proton acceptor in the catalytic mechanism. The shikimate site is built by Asn97 and Asp113. Residues 137-141 (GAGGA), 161-166 (NRTQSK), and Met230 each bind NADP(+). Tyr232 contacts shikimate. Gly254 contacts NADP(+).

This sequence belongs to the shikimate dehydrogenase family. As to quaternary structure, homodimer.

The enzyme catalyses shikimate + NADP(+) = 3-dehydroshikimate + NADPH + H(+). It functions in the pathway metabolic intermediate biosynthesis; chorismate biosynthesis; chorismate from D-erythrose 4-phosphate and phosphoenolpyruvate: step 4/7. Involved in the biosynthesis of the chorismate, which leads to the biosynthesis of aromatic amino acids. Catalyzes the reversible NADPH linked reduction of 3-dehydroshikimate (DHSA) to yield shikimate (SA). This is Shikimate dehydrogenase (NADP(+)) from Shewanella sp. (strain MR-7).